The primary structure comprises 249 residues: ATP synthase subunit a, chloroplastic (249 aa).

5 consecutive transmembrane segments (helical) span residues 40–60 (QVLI…VIAI), 97–117 (VPFI…GALL), 136–156 (INTT…AGLS), 201–221 (LVVV…VMFL), and 222–242 (GLFT…AYIG).

This sequence belongs to the ATPase A chain family. As to quaternary structure, F-type ATPases have 2 components, CF(1) - the catalytic core - and CF(0) - the membrane proton channel. CF(1) has five subunits: alpha(3), beta(3), gamma(1), delta(1), epsilon(1). CF(0) has four main subunits: a, b, b' and c.

The protein localises to the plastid. Its subcellular location is the chloroplast thylakoid membrane. Functionally, key component of the proton channel; it plays a direct role in the translocation of protons across the membrane. The polypeptide is ATP synthase subunit a, chloroplastic (Barbarea verna (Land cress)).